The sequence spans 297 residues: UBX domain-containing protein 1 (297 aa).

Ala-2 bears the N-acetylalanine mark. In terms of domain architecture, UBA spans 2–42 (AELTALESLIEMGFPRGRAEKALALTGNQGIEAAMDWLMEH). The interval 38–214 (WLMEHEDDPD…PPTKREYDQC (177 aa)) is disordered. Over residues 42 to 52 (HEDDPDVDEPL) the composition is skewed to acidic residues. The tract at residues 43-297 (EDDPDVDEPL…VLIVAKKCPS (255 aa)) is interaction with BRCA1. 2 stretches are compositionally biased toward basic and acidic residues: residues 86–122 (LTEEERQEQTKRMLELVAQKQREREEREEREALEREK) and 137–177 (KLQE…ERAK). Ser-199 bears the Phosphoserine mark. Phosphoserine; by MAPK12 is present on Ser-200. Phosphothreonine occurs at positions 207 and 229. The UBX domain maps to 209-291 (REYDQCRIQV…GLVPSAVLIV (83 aa)). The residue at position 270 (Ser-270) is a Phosphoserine.

Interacts with MAVS; this interaction prevents MAVS oligomerization and thus disrupts the RLR signaling pathway. Interacts with CUL1; this interaction inhibits CUL1-mediated degradation of NF-kappa-B inhibitors. Interacts with BIRC2/c-IAP1; this interaction prevents TNFalpha-stimulated RIP1 ubiquitination and subsequent NF-kappa-B activation. Component of a complex required to couple retrotranslocation, ubiquitination and deglycosylation composed of NGLY1, SAKS1, AMFR, VCP and RAD23B. Interacts with HOMER2. Interacts directly with VCP. Interacts with BRCA1 and BARD1; interaction takes place when BRCA1 is not autoubiquitinated but is strongly enhanced in the presence of autoubiquitinated BRCA1.

It localises to the cytoplasm. Its function is as follows. Ubiquitin-binding protein that plays a role in the modulation of innate immune response. Blocks both the RIG-I-like receptors (RLR) and NF-kappa-B pathways. Following viral infection, UBXN1 is induced and recruited to the RLR component MAVS. In turn, interferes with MAVS oligomerization, and disrupts the MAVS/TRAF3/TRAF6 signalosome. This function probably serves as a brake to prevent excessive RLR signaling. Interferes with the TNFalpha-triggered NF-kappa-B pathway by interacting with cellular inhibitors of apoptosis proteins (cIAPs) and thereby inhibiting their recruitment to TNFR1. Also prevents the activation of NF-kappa-B by associating with CUL1 and thus inhibiting NF-kappa-B inhibitor alpha/NFKBIA degradation that remains bound to NF-kappa-B. Interacts with the BRCA1-BARD1 heterodimer and regulates its activity. Specifically binds 'Lys-6'-linked polyubiquitin chains. Interaction with autoubiquitinated BRCA1 leads to the inhibition of the E3 ubiquitin-protein ligase activity of the BRCA1-BARD1 heterodimer. Component of a complex required to couple deglycosylation and proteasome-mediated degradation of misfolded proteins in the endoplasmic reticulum that are retrotranslocated in the cytosol. This chain is UBX domain-containing protein 1 (Ubxn1), found in Mus musculus (Mouse).